Reading from the N-terminus, the 140-residue chain is Myrosinase 2 (140 aa).

Arg-70 serves as the catalytic Nucleophile. N-linked (GlcNAc...) asparagine glycosylation is found at Asn-114 and Asn-127.

Belongs to the glycosyl hydrolase 1 family. In terms of assembly, homodimer.

The catalysed reaction is a thioglucoside + H2O = a sugar + a thiol.. With respect to regulation, inhibited by ascorbate. Its function is as follows. Degradation of glucosinolates (glucose residue linked by a thioglucoside bound to an amino acid derivative) to glucose, sulfate and any of the products: thiocyanates, isothiocyanates, nitriles, epithionitriles or oxazolidine-2-thiones. This Brevicoryne brassicae (Mealy cabbage aphid) protein is Myrosinase 2.